The primary structure comprises 403 residues: Phosphopentomutase (403 aa).

Mn(2+) is bound by residues aspartate 13, aspartate 298, histidine 303, aspartate 339, histidine 340, and histidine 351.

This sequence belongs to the phosphopentomutase family. Mn(2+) is required as a cofactor.

Its subcellular location is the cytoplasm. The enzyme catalyses 2-deoxy-alpha-D-ribose 1-phosphate = 2-deoxy-D-ribose 5-phosphate. It catalyses the reaction alpha-D-ribose 1-phosphate = D-ribose 5-phosphate. The protein operates within carbohydrate degradation; 2-deoxy-D-ribose 1-phosphate degradation; D-glyceraldehyde 3-phosphate and acetaldehyde from 2-deoxy-alpha-D-ribose 1-phosphate: step 1/2. Functionally, isomerase that catalyzes the conversion of deoxy-ribose 1-phosphate (dRib-1-P) and ribose 1-phosphate (Rib-1-P) to deoxy-ribose 5-phosphate (dRib-5-P) and ribose 5-phosphate (Rib-5-P), respectively. The chain is Phosphopentomutase from Streptococcus gordonii (strain Challis / ATCC 35105 / BCRC 15272 / CH1 / DL1 / V288).